Reading from the N-terminus, the 385-residue chain is 1-deoxy-D-xylulose 5-phosphate reductoisomerase (385 aa).

NADPH-binding residues include threonine 10, glycine 11, serine 12, isoleucine 13, lysine 37, and asparagine 124. Lysine 125 contributes to the 1-deoxy-D-xylulose 5-phosphate binding site. Glutamate 126 is a binding site for NADPH. Aspartate 150 serves as a coordination point for Mn(2+). Positions 151, 152, 176, and 199 each coordinate 1-deoxy-D-xylulose 5-phosphate. Glutamate 152 serves as a coordination point for Mn(2+). Glycine 205 is an NADPH binding site. 4 residues coordinate 1-deoxy-D-xylulose 5-phosphate: serine 212, asparagine 217, lysine 218, and glutamate 221. Glutamate 221 serves as a coordination point for Mn(2+).

Belongs to the DXR family. The cofactor is Mg(2+). It depends on Mn(2+) as a cofactor.

The catalysed reaction is 2-C-methyl-D-erythritol 4-phosphate + NADP(+) = 1-deoxy-D-xylulose 5-phosphate + NADPH + H(+). It participates in isoprenoid biosynthesis; isopentenyl diphosphate biosynthesis via DXP pathway; isopentenyl diphosphate from 1-deoxy-D-xylulose 5-phosphate: step 1/6. In terms of biological role, catalyzes the NADPH-dependent rearrangement and reduction of 1-deoxy-D-xylulose-5-phosphate (DXP) to 2-C-methyl-D-erythritol 4-phosphate (MEP). The protein is 1-deoxy-D-xylulose 5-phosphate reductoisomerase of Clostridium botulinum (strain Loch Maree / Type A3).